Consider the following 326-residue polypeptide: Glycerol-3-phosphate dehydrogenase [NAD(P)+] (326 aa).

NADPH is bound by residues Trp-13, Arg-33, and Lys-107. Sn-glycerol 3-phosphate contacts are provided by Lys-107, Gly-135, and Ser-137. NADPH is bound at residue Ala-139. Residues Lys-190, Asp-243, Ser-253, Arg-254, and Asn-255 each contribute to the sn-glycerol 3-phosphate site. Lys-190 (proton acceptor) is an active-site residue. Position 254 (Arg-254) interacts with NADPH. Positions 273 and 275 each coordinate NADPH.

This sequence belongs to the NAD-dependent glycerol-3-phosphate dehydrogenase family.

The protein localises to the cytoplasm. The catalysed reaction is sn-glycerol 3-phosphate + NAD(+) = dihydroxyacetone phosphate + NADH + H(+). It carries out the reaction sn-glycerol 3-phosphate + NADP(+) = dihydroxyacetone phosphate + NADPH + H(+). The protein operates within membrane lipid metabolism; glycerophospholipid metabolism. Functionally, catalyzes the reduction of the glycolytic intermediate dihydroxyacetone phosphate (DHAP) to sn-glycerol 3-phosphate (G3P), the key precursor for phospholipid synthesis. This chain is Glycerol-3-phosphate dehydrogenase [NAD(P)+], found in Brucella abortus (strain 2308).